The sequence spans 360 residues: Peptide chain release factor 1 (360 aa).

Q237 carries the post-translational modification N5-methylglutamine.

This sequence belongs to the prokaryotic/mitochondrial release factor family. In terms of processing, methylated by PrmC. Methylation increases the termination efficiency of RF1.

It is found in the cytoplasm. In terms of biological role, peptide chain release factor 1 directs the termination of translation in response to the peptide chain termination codons UAG and UAA. The sequence is that of Peptide chain release factor 1 from Nitrosococcus oceani (strain ATCC 19707 / BCRC 17464 / JCM 30415 / NCIMB 11848 / C-107).